A 164-amino-acid polypeptide reads, in one-letter code: Interleukin-31 (164 aa).

The signal sequence occupies residues 1 to 23 (MASHSGPSTSVLFLFCCLGGWLA). 2 N-linked (GlcNAc...) asparagine glycosylation sites follow: N67 and N100.

As to expression, detected at low levels in testis, bone marrow, skeletal muscle, kidney, colon, thymus, small intestine and trachea.

It localises to the secreted. In terms of biological role, activates STAT3 and possibly STAT1 and STAT5 through the IL31 heterodimeric receptor composed of IL31RA and OSMR. May function in skin immunity. Enhances myeloid progenitor cell survival in vitro. Induces RETNLA and serum amyloid A protein expression in macrophages. In Homo sapiens (Human), this protein is Interleukin-31 (IL31).